A 213-amino-acid polypeptide reads, in one-letter code: Uridine kinase (213 aa).

14–21 lines the ATP pocket; the sequence is GASASGKS.

It belongs to the uridine kinase family.

The protein resides in the cytoplasm. The catalysed reaction is uridine + ATP = UMP + ADP + H(+). The enzyme catalyses cytidine + ATP = CMP + ADP + H(+). It participates in pyrimidine metabolism; CTP biosynthesis via salvage pathway; CTP from cytidine: step 1/3. The protein operates within pyrimidine metabolism; UMP biosynthesis via salvage pathway; UMP from uridine: step 1/1. The chain is Uridine kinase from Vibrio campbellii (strain ATCC BAA-1116).